We begin with the raw amino-acid sequence, 154 residues long: Catabolic 3-dehydroquinase (154 aa).

The active-site Proton acceptor is the Y25. Residues N79, H85, and D92 each contribute to the substrate site. H105 acts as the Proton donor in catalysis. Substrate-binding positions include 106–107 (IS) and R116.

The protein belongs to the type-II 3-dehydroquinase family. In terms of assembly, homododecamer. Adopts a ring-like structure, composed of an arrangement of two hexameric rings stacked on top of one another.

It carries out the reaction 3-dehydroquinate = 3-dehydroshikimate + H2O. Its pathway is aromatic compound metabolism; 3,4-dihydroxybenzoate biosynthesis; 3,4-dihydroxybenzoate from 3-dehydroquinate: step 1/2. Its function is as follows. Is involved in the catabolism of quinate. Allows the utilization of quinate as carbon source via the beta-ketoadipate pathway. The sequence is that of Catabolic 3-dehydroquinase from Sclerotinia sclerotiorum (strain ATCC 18683 / 1980 / Ss-1) (White mold).